The following is a 516-amino-acid chain: GMP synthase [glutamine-hydrolyzing] (516 aa).

Positions 6–199 (KVLILDFGSQ…LFEIAGLTSG (194 aa)) constitute a Glutamine amidotransferase type-1 domain. The active-site Nucleophile is the Cys-83. Active-site residues include His-173 and Glu-175. The region spanning 200-391 (WTMSSFLETE…LGMPDFIIWR (192 aa)) is the GMPS ATP-PPase domain. 227–233 (SGGVDST) is an ATP binding site.

As to quaternary structure, homodimer.

It carries out the reaction XMP + L-glutamine + ATP + H2O = GMP + L-glutamate + AMP + diphosphate + 2 H(+). The protein operates within purine metabolism; GMP biosynthesis; GMP from XMP (L-Gln route): step 1/1. In terms of biological role, catalyzes the synthesis of GMP from XMP. In Solidesulfovibrio magneticus (strain ATCC 700980 / DSM 13731 / RS-1) (Desulfovibrio magneticus), this protein is GMP synthase [glutamine-hydrolyzing].